We begin with the raw amino-acid sequence, 757 residues long: DNA endonuclease RBBP8 (757 aa).

The tract at residues 22–45 (DLWTKLKEYHDKETQGLQVKVTKL) is essential for binding to the MRN complex and for RPA focus formation on DNA damage. Residues 35-84 (TQGLQVKVTKLKKERILDAQRLEEFFTKNQQLREQQKVLHETIKVLEDRL) adopt a coiled-coil conformation. Residues 45–160 (LKKERILDAQ…TDLESEEDVI (116 aa)) form a required for interaction with LMO4, probably by stabilizing the interaction through RPPB8 dimerization region. Glycyl lysine isopeptide (Lys-Gly) (interchain with G-Cter in SUMO2) cross-links involve residues lysine 62 and lysine 115. Residues 117–138 (ITELMNEKNTLQEENKKLSEQL) are a coiled coil. Lysine 193 participates in a covalent cross-link: Glycyl lysine isopeptide (Lys-Gly) (interchain with G-Cter in SUMO2). Serine 272 is modified (phosphoserine). Residue threonine 309 is modified to Phosphothreonine. Serine 320, serine 321, and serine 343 each carry phosphoserine. Residues 348-375 (GKKTHLKTVPLSNTSAPGPEKPRSKSED) form a disordered region. Residues lysine 354 and lysine 372 each participate in a glycyl lysine isopeptide (Lys-Gly) (interchain with G-Cter in SUMO2) cross-link. Serine 373 is subject to Phosphoserine. Residues lysine 390, lysine 399, and lysine 405 each participate in a glycyl lysine isopeptide (Lys-Gly) (interchain with G-Cter in SUMO2) cross-link. Over residues 407–417 (TSEPISEQGNI) the composition is skewed to polar residues. The disordered stretch occupies residues 407–430 (TSEPISEQGNIGHSKDTDRDKHVV). Residues 419 to 429 (HSKDTDRDKHV) show a composition bias toward basic and acidic residues. Residues lysine 433 and lysine 443 each participate in a glycyl lysine isopeptide (Lys-Gly) (interchain with G-Cter in SUMO2) cross-link. The segment at 484–488 (PLDLS) is PXDLS motif. A PXDLS motif motif is present at residues 484–488 (PLDLS). Positions 503–551 (CENSKIRFRQVTLYEALKPIPRDSSSSRKALSGSCGLTKDSPEEPCLQE) are damage-recruitment motif. Residue lysine 520 forms a Glycyl lysine isopeptide (Lys-Gly) (interchain with G-Cter in SUMO2); alternate linkage. The interval 524–544 (RDSSSSRKALSGSCGLTKDSP) is disordered. Glycyl lysine isopeptide (Lys-Gly) (interchain with G-Cter in SUMO2) cross-links involve residues lysine 564 and lysine 570. Residue lysine 596 forms a Glycyl lysine isopeptide (Lys-Gly) (interchain with G-Cter in SUMO2); alternate linkage. Residues lysine 605, lysine 630, and lysine 632 each participate in a glycyl lysine isopeptide (Lys-Gly) (interchain with G-Cter in SUMO2) cross-link. The required for interaction with LMO4, probably by making physical contact with LMO4 stretch occupies residues 633–677 (SLQNNQDVSFENIQWSIDPGADLSQYKMGVTVDDTKDGSQSRLAG). At serine 656 the chain carries Phosphoserine; by ATM. Lysine 668 is covalently cross-linked (Glycyl lysine isopeptide (Lys-Gly) (interchain with G-Cter in SUMO2)). Serine 671 carries the phosphoserine modification. Residues 696 to 728 (KKQEQKGEESPNGERKMNDSLEDMFDRTTHEEY) show a composition bias toward basic and acidic residues. The segment at 696 to 757 (KKQEQKGEES…TTTKKPNISW (62 aa)) is disordered. A Glycyl lysine isopeptide (Lys-Gly) (interchain with G-Cter in SUMO2) cross-link involves residue lysine 711. Serine 715 is modified (phosphoserine). Over residues 747-757 (STTTKKPNISW) the composition is skewed to polar residues.

It belongs to the COM1/SAE2/CtIP family. As to quaternary structure, homotetramer; formed by antiparallel association of helical extensions protruding from the N-termini of two parallel coiled-coil dimers. Forms a dumbbell-shaped particle in which polar globular domains are held about 30 nm apart by a central rod. Homotetramerization is required for DNA-end resection and repair. Interacts (via the PXDLS motif) with CTBP1; the interaction is disrupted via binding of the adenovirus E1A to CTBP1. Component of the BRCA1-RBBP8 complex. Interacts (the Ser-321 phosphorylated form) with BRCA1 (via the C-terminal BRCT domains): the interaction occurs in the G2 phase, ubiquitinates RBBP8 and involves RBBP8 in BRCA1-dependent G2/M checkpoint control on DNA damage. Interacts with RB1. Interacts with the MRN complex. Interacts directly with MRE11; the interaction is required for efficient homologous recombination (HR) and regulation of the MRN complex. Interacts directly with RAD50. Interacts (when phosphorylated by CDK1) with NBN; promoting association with the MRN complex. Interacts with LMO4 (via the LIM zinc-binding 1 domain). Interacts with SIAH1. Interacts with RNF138. Interacts with EXD2. Interacts with CUL3 and KLHL15; this interaction leads to RBBP8 proteasomal degradation. Directly interacts with PIN1; this interaction depends upon RBBP8 phosphorylation, predominantly at Thr-309. Interacts with FZR1; this interaction leads to APC/C-mediated RBBP8 proteasomal degradation. Interacts with AUNIP; leading to recruit RBBP8 to sites of DNA damage. Interacts with SAMHD1. Interacts with HDGFL2. In terms of processing, hyperphosphorylation upon ionizing radiation results in dissociation from BRCA1. Phosphorylation by CDK1 is essential for the recruitment to DNA and the DNA repair function. Phosphorylated on Ser-321 as cells enter G2 phase. This phosphorylation is required for binding BRCA1 and for the G2/M DNA damage transition checkpoint control. Phosphorylation at Thr-309, probably catalyzed by CDK2, is required for PIN1-binding, while phosphorylation at Ser-272 serves as a PIN1 isomerization site. Phosphorylation at Thr-309 is cell-cycle dependent. It steadily increases during S phase, peaks at late S/G2 phase, and drops at G1. Phosphorylation is not required for tetramerization. Binds to DNA more strongly when dephosphorylated. Post-translationally, ubiquitinated. Ubiquitination at multiple sites by BRCA1 (via its N-terminal RING domain) does not lead to its proteasomal degradation but instead the ubiquitinated RBBP8 binds to chromatin following DNA damage and may play a role in G2/M checkpoint control. Ubiquitinated by RNF138 at its N-terminus. Ubiquitinated through 'Lys-48' by the E3 CUL3-KLHL15 complex; this modification leads to proteasomal degradation. Ubiquitinated by the E3 FZR1/APC/C complex; this modification leads to proteasomal degradation.

It localises to the nucleus. The protein resides in the chromosome. Endonuclease that cooperates with the MRE11-RAD50-NBN (MRN) complex in DNA-end resection, the first step of double-strand break (DSB) repair through the homologous recombination (HR) pathway. HR is restricted to S and G2 phases of the cell cycle and preferentially repairs DSBs resulting from replication fork collapse. Key determinant of DSB repair pathway choice, as it commits cells to HR by preventing classical non-homologous end-joining (NHEJ). Specifically promotes the endonuclease activity of the MRN complex to clear DNA ends containing protein adducts: recruited to DSBs by NBN following phosphorylation by CDK1, and promotes the endonuclease activity of MRE11 to clear protein-DNA adducts and generate clean double-strand break ends. Functions downstream of the MRN complex and ATM, promotes ATR activation and its recruitment to DSBs in the S/G2 phase facilitating the generation of ssDNA. Component of the BRCA1-RBBP8 complex that regulates CHEK1 activation and controls cell cycle G2/M checkpoints on DNA damage. During immunoglobulin heavy chain class-switch recombination, promotes microhomology-mediated alternative end joining (A-NHEJ) and plays an essential role in chromosomal translocations. Binds preferentially to DNA Y-junctions and to DNA substrates with blocked ends and promotes intermolecular DNA bridging. This chain is DNA endonuclease RBBP8 (RBBP8), found in Bos taurus (Bovine).